Consider the following 473-residue polypeptide: MYTYMEYLQKCFYKSTNWNEDNIYSNITATSQALLDFPIPNGFKIDSSSKTTDYSASSFTLSNHHQINGSLAYLYSSIPLTNTMGTKDVSLQDAIAGFRIIEPSVGLRSKLKNNIMSNRSSLLYGRMYFPGSALEAMIIKRLTKNSQLLIKCVNNPHLEKNGTMIVYLQNNTAKYSRELIYSTNEALIGLRCLYNLGDATSHNFTNINPAVIPKFDNSVVSIGTEIWYAARTMSPGLSAALRYSTRSTSTGKPLTMTLAINPIVGHVSSTYTVKTSVASTFCSKYDFNVFSYASNLSLGFELYSYANKKKNSFPSFEHHEIHSSSEENKYLKKHPELQRHHNLHHNLHHQRVPIKSHKYEGNRTIINPIQNLDNVYHINPTLLSSNGSTSTTTNNENTNTSETVTAAFQNLVNESDFSSVFKFSTSLNDKVVKILWEGRLKEFLVSTGVKLSLNPITNTPEFNKLGISFSYAL.

The protein belongs to the MDM10 family. As to quaternary structure, component of the ER-mitochondria encounter structure (ERMES) or MDM complex, composed of MMM1, MDM10, MDM12 and MDM34. Associates with the mitochondrial outer membrane sorting assembly machinery SAM(core) complex.

The protein localises to the mitochondrion outer membrane. In terms of biological role, component of the ERMES/MDM complex, which serves as a molecular tether to connect the endoplasmic reticulum and mitochondria. Components of this complex are involved in the control of mitochondrial shape and protein biogenesis and may function in phospholipid exchange. MDM10 is involved in the late assembly steps of the general translocase of the mitochondrial outer membrane (TOM complex). Functions in the TOM40-specific route of the assembly of outer membrane beta-barrel proteins, including the association of TOM40 with the receptor TOM22 and small TOM proteins. Can associate with the SAM(core) complex as well as the MDM12-MMM1 complex, both involved in late steps of the major beta-barrel assembly pathway, that is responsible for biogenesis of all outer membrane beta-barrel proteins. May act as a switch that shuttles between both complexes and channels precursor proteins into the TOM40-specific pathway. Plays a role in mitochondrial morphology and in the inheritance of mitochondria. This is Mitochondrial distribution and morphology protein 10 from Candida albicans (strain SC5314 / ATCC MYA-2876) (Yeast).